The sequence spans 455 residues: Signal recognition particle 54 kDa protein (455 aa).

GTP is bound by residues 104 to 111 (GLYGHGKT), 184 to 188 (DTSGR), and 242 to 245 (TKMD).

The protein belongs to the GTP-binding SRP family. SRP54 subfamily. In terms of assembly, part of the signal recognition particle protein translocation system, which is composed of SRP and FtsY. Archaeal SRP consists of a 7S RNA molecule of 300 nucleotides and two protein subunits: SRP54 and SRP19.

Its subcellular location is the cytoplasm. It catalyses the reaction GTP + H2O = GDP + phosphate + H(+). Its function is as follows. Involved in targeting and insertion of nascent membrane proteins into the cytoplasmic membrane. Binds to the hydrophobic signal sequence of the ribosome-nascent chain (RNC) as it emerges from the ribosomes. The SRP-RNC complex is then targeted to the cytoplasmic membrane where it interacts with the SRP receptor FtsY. In Thermoplasma volcanium (strain ATCC 51530 / DSM 4299 / JCM 9571 / NBRC 15438 / GSS1), this protein is Signal recognition particle 54 kDa protein.